The sequence spans 329 residues: BTB/POZ domain-containing protein At1g55760 (329 aa).

In terms of domain architecture, BTB spans 164 to 231; sequence TDITINASDG…IYGNIQNEDF (68 aa).

Its pathway is protein modification; protein ubiquitination. Functionally, may act as a substrate-specific adapter of an E3 ubiquitin-protein ligase complex (CUL3-RBX1-BTB) which mediates the ubiquitination and subsequent proteasomal degradation of target proteins. The sequence is that of BTB/POZ domain-containing protein At1g55760 from Arabidopsis thaliana (Mouse-ear cress).